We begin with the raw amino-acid sequence, 512 residues long: Cytochrome P450 76C2 (512 aa).

A helical membrane pass occupies residues 3-23 (IIFEQALFPLFCFVLSFFIIF). Residue cysteine 451 coordinates heme.

It belongs to the cytochrome P450 family. The cofactor is heme.

Its subcellular location is the membrane. This Arabidopsis thaliana (Mouse-ear cress) protein is Cytochrome P450 76C2 (CYP76C2).